We begin with the raw amino-acid sequence, 172 residues long: Nicotinamide-nucleotide adenylyltransferase (172 aa).

The protein belongs to the archaeal NMN adenylyltransferase family.

The protein resides in the cytoplasm. The enzyme catalyses beta-nicotinamide D-ribonucleotide + ATP + H(+) = diphosphate + NAD(+). Its pathway is cofactor biosynthesis; NAD(+) biosynthesis; NAD(+) from nicotinamide D-ribonucleotide: step 1/1. In Methanococcus vannielii (strain ATCC 35089 / DSM 1224 / JCM 13029 / OCM 148 / SB), this protein is Nicotinamide-nucleotide adenylyltransferase.